Consider the following 275-residue polypeptide: Structure-specific endonuclease subunit SLX1 (275 aa).

Positions 12–95 (RFFGVYLLYC…QHPHASRRLA (84 aa)) constitute a GIY-YIG domain. The segment covering 148–161 (HVPLAFGPPPPQAP) has biased composition (pro residues). Residues 148–179 (HVPLAFGPPPPQAPAPRRRAGPFDDAEPEPDQ) are disordered. The SLX1-type zinc finger occupies 186–238 (CSLCAQTIQDEEGPLCCPHPGCLLRAHVICLAEEFLQEEPGQLLPLEGQCPCC).

It belongs to the SLX1 family. In terms of assembly, forms a heterodimer with SLX4. A divalent metal cation serves as cofactor.

It is found in the nucleus. Functionally, catalytic subunit of the SLX1-SLX4 structure-specific endonuclease that resolves DNA secondary structures generated during DNA repair and recombination. Has endonuclease activity towards branched DNA substrates, introducing single-strand cuts in duplex DNA close to junctions with ss-DNA. Has a preference for 5'-flap structures, and promotes symmetrical cleavage of static and migrating Holliday junctions (HJs). Resolves HJs by generating two pairs of ligatable, nicked duplex products. The protein is Structure-specific endonuclease subunit SLX1 of Homo sapiens (Human).